The chain runs to 167 residues: Single-stranded DNA-binding protein 2 (167 aa).

The SSB domain occupies Met-1–Glu-104. Positions Asn-107–Phe-167 are disordered. 2 stretches are compositionally biased toward low complexity: residues Gln-109–Asn-118 and Ser-132–Ser-147. The short motif at Asp-162–Phe-167 is the Important for interaction with partner proteins element.

As to quaternary structure, homotetramer.

In terms of biological role, plays an important role in DNA replication, recombination and repair. Binds to ssDNA and to an array of partner proteins to recruit them to their sites of action during DNA metabolism. The polypeptide is Single-stranded DNA-binding protein 2 (ssb2) (Staphylococcus aureus (strain MSSA476)).